Here is a 304-residue protein sequence, read N- to C-terminus: Probable 5-dehydro-4-deoxyglucarate dehydratase (304 aa).

It belongs to the DapA family.

It carries out the reaction 5-dehydro-4-deoxy-D-glucarate + H(+) = 2,5-dioxopentanoate + CO2 + H2O. Its pathway is carbohydrate acid metabolism; D-glucarate degradation; 2,5-dioxopentanoate from D-glucarate: step 2/2. The chain is Probable 5-dehydro-4-deoxyglucarate dehydratase from Methylobacterium radiotolerans (strain ATCC 27329 / DSM 1819 / JCM 2831 / NBRC 15690 / NCIMB 10815 / 0-1).